Reading from the N-terminus, the 446-residue chain is Probable polyamine aminopropyl transferase (446 aa).

A unknown region spans residues 1-117; it reads MVEPAIGRNH…KRIACVVSAV (117 aa). The disordered stretch occupies residues 64 to 94; that stretch reads GRGAERWHRSPRQANGRFSNQRYSSTSPNSS. Positions 75 to 94 are enriched in polar residues; sequence RQANGRFSNQRYSSTSPNSS. The region spanning 116–351 is the PABS domain; it reads AVIFVATSCV…ELFAKKPGSG (236 aa). Residues 118-353 are spermidine synthase; it reads IFVATSCVSP…FAKKPGSGSE (236 aa). Residues Asn147, Glu226, and 251 to 252 contribute to the S-methyl-5'-thioadenosine site; that span reads DG. Residue Asp269 is the Proton acceptor of the active site.

Belongs to the spermidine/spermine synthase family. Homodimer or homotetramer.

It localises to the cytoplasm. It catalyses the reaction S-adenosyl 3-(methylsulfanyl)propylamine + putrescine = S-methyl-5'-thioadenosine + spermidine + H(+). It participates in amine and polyamine biosynthesis; spermidine biosynthesis; spermidine from putrescine: step 1/1. Its function is as follows. Catalyzes the irreversible transfer of a propylamine group from the amino donor S-adenosylmethioninamine (decarboxy-AdoMet) to putrescine (1,4-diaminobutane) to yield spermidine. The polypeptide is Probable polyamine aminopropyl transferase (speE) (Bifidobacterium longum (strain NCC 2705)).